Reading from the N-terminus, the 944-residue chain is Translation factor GUF1 homolog, mitochondrial (944 aa).

In terms of domain architecture, tr-type G spans 201-379 (KNVRNFCILA…IITDIPYPPI (179 aa)). GTP contacts are provided by residues 210–217 (AHIDSGKS), 271–275 (DTPGH), and 325–328 (NKID).

This sequence belongs to the TRAFAC class translation factor GTPase superfamily. Classic translation factor GTPase family. LepA subfamily.

Its subcellular location is the mitochondrion inner membrane. It catalyses the reaction GTP + H2O = GDP + phosphate + H(+). Functionally, promotes mitochondrial protein synthesis. May act as a fidelity factor of the translation reaction, by catalyzing a one-codon backward translocation of tRNAs on improperly translocated ribosomes. Binds to mitochondrial ribosomes in a GTP-dependent manner. The polypeptide is Translation factor GUF1 homolog, mitochondrial (Plasmodium yoelii yoelii).